The following is a 457-amino-acid chain: Proton-translocating ferredoxin:NAD(+) oxidoreductase complex subunit C (457 aa).

4Fe-4S ferredoxin-type domains follow at residues 353-386 and 396-427; these read TKND…MLSI and AKEE…YIRY. Residues cysteine 365, cysteine 368, cysteine 371, cysteine 375, cysteine 405, cysteine 408, cysteine 411, and cysteine 415 each contribute to the [4Fe-4S] cluster site. The segment at 433-457 is disordered; that stretch reads RAAGEREKAKAAKAKEKKEKEEVLK.

Belongs to the 4Fe4S bacterial-type ferredoxin family. RnfC subfamily. In terms of assembly, the complex is composed of six subunits: RnfA, RnfB, RnfC, RnfD, RnfE and RnfG. Requires [4Fe-4S] cluster as cofactor.

It is found in the cell membrane. Functionally, part of a membrane-bound complex that couples electron transfer with translocation of ions across the membrane. Couples electron transfer from reduced ferredoxin to NAD(+) with translocation of H(+) out of the cell. Essential for energy conservation during autotrophic growth. Contributes to ATP synthesis during heterotrophic growth. The polypeptide is Proton-translocating ferredoxin:NAD(+) oxidoreductase complex subunit C (Clostridium ljungdahlii (strain ATCC 55383 / DSM 13528 / PETC)).